The sequence spans 79 residues: Cell division protein ZapB (79 aa).

Residues 4–78 (EVFEKLEAKV…LRALLGKMEE (75 aa)) adopt a coiled-coil conformation.

It belongs to the ZapB family. As to quaternary structure, homodimer. The ends of the coiled-coil dimer bind to each other, forming polymers. Interacts with FtsZ.

Its subcellular location is the cytoplasm. In terms of biological role, non-essential, abundant cell division factor that is required for proper Z-ring formation. It is recruited early to the divisome by direct interaction with FtsZ, stimulating Z-ring assembly and thereby promoting cell division earlier in the cell cycle. Its recruitment to the Z-ring requires functional FtsA or ZipA. In Pectobacterium atrosepticum (strain SCRI 1043 / ATCC BAA-672) (Erwinia carotovora subsp. atroseptica), this protein is Cell division protein ZapB.